The following is a 296-amino-acid chain: Non-selective voltage-gated ion channel VDAC2 (296 aa).

Residue lysine 25 coordinates ATP. Lysine 25 participates in a covalent cross-link: Glycyl lysine isopeptide (Lys-Gly) (interchain with G-Cter in ubiquitin). Position 26 is a phosphoserine (serine 26). Lysine 33 provides a ligand contact to ATP. Residue lysine 33 is modified to N6-acetyllysine; alternate. N6-succinyllysine; alternate is present on lysine 33. A Glycyl lysine isopeptide (Lys-Gly) (interchain with G-Cter in ubiquitin); alternate cross-link involves residue lysine 33. The next 2 membrane-spanning stretches (beta stranded) occupy residues 39 to 48 and 52 to 60; these read LVKLDVKTKS and VEFTTSGSS. Residues lysine 66 and lysine 74 each participate in a glycyl lysine isopeptide (Lys-Gly) (interchain with G-Cter in ubiquitin) cross-link. The beta stranded transmembrane segment at 67–77 threads the bilayer; that stretch reads VNGSLETKYKW. Tyrosine 80 carries the post-translational modification Phosphotyrosine. Beta stranded transmembrane passes span 82 to 89, 93 to 102, and 108 to 117; these read LTFTEKWN, TLGTEIAIED, and LKLTFDTTFS. Residue threonine 120 is modified to Phosphothreonine. Lysine 122 bears the N6-acetyllysine; alternate mark. Lysine 122 participates in a covalent cross-link: Glycyl lysine isopeptide (Lys-Gly) (interchain with G-Cter in ubiquitin); alternate. Residue lysine 123 forms a Glycyl lysine isopeptide (Lys-Gly) (interchain with G-Cter in ubiquitin) linkage. The next 4 beta stranded transmembrane spans lie at 124–133, 136–143, 150–158, and 163–171; these read SGKIKSAYKR, LNLGCDVD, AIHGSAVFG, and LAGYQMTFD. A Glycyl lysine isopeptide (Lys-Gly) (interchain with G-Cter in ubiquitin) cross-link involves residue lysine 174. Beta stranded transmembrane passes span 176–188, 191–198, 202–211, 215–224, 231–240, and 244–251; these read KLTRNNFSVGYKT, FQLHTNVN, EFGGSIYQKV, LETAVNLAWT, RFGIAAKYKL, and ASISAKVN. Serine 206 is modified (phosphoserine). Serine 253 is modified (phosphoserine). NAD(+) contacts are provided by residues 255–257 and 273–277; these read LVG and SALID. 2 beta stranded membrane-spanning segments follow: residues 255-264 and 267-276; these read LVGVGYTQTL and GVKLTLSALI. Position 279 is an N6-acetyllysine; alternate (lysine 279). A Glycyl lysine isopeptide (Lys-Gly) (interchain with G-Cter in ubiquitin); alternate cross-link involves residue lysine 279. The chain crosses the membrane as a beta stranded span at residues 286-295; that stretch reads HKLGLGLELE. A Glycyl lysine isopeptide (Lys-Gly) (interchain with G-Cter in ubiquitin) cross-link involves residue lysine 287.

This sequence belongs to the eukaryotic mitochondrial porin family. In terms of assembly, monomer, homodimer and higher order oligomers; formation of higher order structures is necessary for scramblase activity. Ubiquitinated by PRKN during mitophagy, leading to its degradation and enhancement of mitophagy. Deubiquitinated by USP30.

The protein resides in the mitochondrion outer membrane. Its subcellular location is the membrane. The enzyme catalyses chloride(in) = chloride(out). The catalysed reaction is K(+)(in) = K(+)(out). It carries out the reaction a 1,2-diacyl-sn-glycero-3-phospho-L-serine(in) = a 1,2-diacyl-sn-glycero-3-phospho-L-serine(out). It catalyses the reaction a 1,2-diacyl-sn-glycero-3-phosphocholine(in) = a 1,2-diacyl-sn-glycero-3-phosphocholine(out). The enzyme catalyses a 1,2-diacyl-sn-glycero-3-phospho-(1D-myo-inositol)(in) = a 1,2-diacyl-sn-glycero-3-phospho-(1D-myo-inositol)(out). In terms of biological role, non-selective voltage-gated ion channel that mediates the transport of anions and cations through the mitochondrion outer membrane and plasma membrane. The channel adopts an open conformation at zero mV and a closed conformation at both positive and negative potentials. There are two populations of channels; the main that functions in a lower open-state conductance with lower ion selectivity, that switch, in a voltage-dependent manner, from the open to a low-conducting 'closed' state and the other that has a normal ion selectivity in the typical high conductance, 'open' state. Binds various lipids, including the sphingolipid ceramide, the phospholipid phosphatidylcholine, and the sterols cholesterol and oxysterol. Binding of ceramide promotes the mitochondrial outer membrane permeabilization (MOMP) apoptotic pathway. Its function is as follows. Catalyzes the scrambling of phospholipids across the outer mitochondrial membrane; the mechanism is unrelated to channel activity and is capable of translocating both anionic and zwitterionic phospholipids. The polypeptide is Non-selective voltage-gated ion channel VDAC2 (Meleagris gallopavo (Wild turkey)).